Here is a 624-residue protein sequence, read N- to C-terminus: uncharacterized protein (624 aa).

The segment at 113–249 (SINVRTSATT…RFHPVTDINK (137 aa)) is disordered. The span at 118-225 (TSATTTESTN…ATTTESTNAS (108 aa)) shows a compositional bias: low complexity. Residues 226–249 (AKEDANKDGNAEDNRFHPVTDINK) show a composition bias toward basic and acidic residues.

This is an uncharacterized protein from Saccharomyces cerevisiae (strain ATCC 204508 / S288c) (Baker's yeast).